The following is a 961-amino-acid chain: Probable inorganic carbon transporter subunit DabA (961 aa).

Positions 406, 408, 653, and 668 each coordinate Zn(2+).

This sequence belongs to the inorganic carbon transporter (TC 9.A.2) DabA family. In terms of assembly, forms a complex with DabB. It depends on Zn(2+) as a cofactor.

The protein localises to the cell inner membrane. Part of an energy-coupled inorganic carbon pump. In Hydrogenobaculum sp. (strain Y04AAS1), this protein is Probable inorganic carbon transporter subunit DabA.